A 177-amino-acid polypeptide reads, in one-letter code: NADH-quinone oxidoreductase subunit B (177 aa).

[4Fe-4S] cluster is bound by residues C56, C57, C121, and C151.

This sequence belongs to the complex I 20 kDa subunit family. As to quaternary structure, NDH-1 is composed of 14 different subunits. Subunits NuoB, C, D, E, F, and G constitute the peripheral sector of the complex. [4Fe-4S] cluster serves as cofactor.

It is found in the cell inner membrane. The catalysed reaction is a quinone + NADH + 5 H(+)(in) = a quinol + NAD(+) + 4 H(+)(out). In terms of biological role, NDH-1 shuttles electrons from NADH, via FMN and iron-sulfur (Fe-S) centers, to quinones in the respiratory chain. Couples the redox reaction to proton translocation (for every two electrons transferred, four hydrogen ions are translocated across the cytoplasmic membrane), and thus conserves the redox energy in a proton gradient. The chain is NADH-quinone oxidoreductase subunit B from Sphingopyxis alaskensis (strain DSM 13593 / LMG 18877 / RB2256) (Sphingomonas alaskensis).